The following is a 98-amino-acid chain: MALTKIELAESLVEKCGFDKRIAKLFVEQFFEEIRSSLEKGEEVKLSGFGNFSLREKNARPGRNPKTGETVAVTARRVVVFKPGQKLRDRVENVKVKA.

It belongs to the bacterial histone-like protein family. As to quaternary structure, heterodimer of an alpha and a beta chain.

Its function is as follows. This protein is one of the two subunits of integration host factor, a specific DNA-binding protein that functions in genetic recombination as well as in transcriptional and translational control. The protein is Integration host factor subunit alpha of Actinobacillus pleuropneumoniae serotype 5b (strain L20).